The chain runs to 381 residues: 1-deoxy-D-xylulose 5-phosphate reductoisomerase (381 aa).

8 residues coordinate NADPH: Ser-10, Gly-11, Ser-12, Ile-13, Gly-36, Lys-37, Asn-38, and Asn-121. A 1-deoxy-D-xylulose 5-phosphate-binding site is contributed by Lys-122. Glu-123 lines the NADPH pocket. Position 147 (Asp-147) interacts with Mn(2+). Residues Ser-148, Glu-149, Ser-173, and His-196 each coordinate 1-deoxy-D-xylulose 5-phosphate. Residue Glu-149 coordinates Mn(2+). An NADPH-binding site is contributed by Gly-202. Ser-209, Asn-214, Lys-215, and Glu-218 together coordinate 1-deoxy-D-xylulose 5-phosphate. Position 218 (Glu-218) interacts with Mn(2+).

It belongs to the DXR family. Mg(2+) is required as a cofactor. Mn(2+) serves as cofactor.

The catalysed reaction is 2-C-methyl-D-erythritol 4-phosphate + NADP(+) = 1-deoxy-D-xylulose 5-phosphate + NADPH + H(+). It functions in the pathway isoprenoid biosynthesis; isopentenyl diphosphate biosynthesis via DXP pathway; isopentenyl diphosphate from 1-deoxy-D-xylulose 5-phosphate: step 1/6. In terms of biological role, catalyzes the NADPH-dependent rearrangement and reduction of 1-deoxy-D-xylulose-5-phosphate (DXP) to 2-C-methyl-D-erythritol 4-phosphate (MEP). This Geobacillus sp. (strain WCH70) protein is 1-deoxy-D-xylulose 5-phosphate reductoisomerase.